Here is a 244-residue protein sequence, read N- to C-terminus: Probable cytokinin riboside 5'-monophosphate phosphoribohydrolase LOGL2 (244 aa).

Substrate contacts are provided by residues glutamate 91, 109–110 (RK), and 126–132 (GYGTLEE).

Belongs to the LOG family.

It carries out the reaction N(6)-(dimethylallyl)adenosine 5'-phosphate + H2O = N(6)-dimethylallyladenine + D-ribose 5-phosphate. The catalysed reaction is 9-ribosyl-trans-zeatin 5'-phosphate + H2O = trans-zeatin + D-ribose 5-phosphate. In terms of biological role, cytokinin-activating enzyme working in the direct activation pathway. Phosphoribohydrolase that converts inactive cytokinin nucleotides to the biologically active free-base forms. The chain is Probable cytokinin riboside 5'-monophosphate phosphoribohydrolase LOGL2 (LOGL2) from Oryza sativa subsp. japonica (Rice).